Here is a 223-residue protein sequence, read N- to C-terminus: ATP-dependent dethiobiotin synthetase BioD (223 aa).

Thr-16 is a Mg(2+) binding site. The active site involves Lys-37. Ser-41 contacts substrate. Positions 50 and 111 each coordinate Mg(2+). Residues Asp-50, 111–114 (EGAG), and 171–172 (NR) each bind ATP.

The protein belongs to the dethiobiotin synthetase family. Homodimer. Requires Mg(2+) as cofactor.

It localises to the cytoplasm. It carries out the reaction (7R,8S)-7,8-diammoniononanoate + CO2 + ATP = (4R,5S)-dethiobiotin + ADP + phosphate + 3 H(+). The protein operates within cofactor biosynthesis; biotin biosynthesis; biotin from 7,8-diaminononanoate: step 1/2. Catalyzes a mechanistically unusual reaction, the ATP-dependent insertion of CO2 between the N7 and N8 nitrogen atoms of 7,8-diaminopelargonic acid (DAPA, also called 7,8-diammoniononanoate) to form a ureido ring. The sequence is that of ATP-dependent dethiobiotin synthetase BioD from Anaeromyxobacter dehalogenans (strain 2CP-C).